The sequence spans 37 residues: Large ribosomal subunit protein bL36 (37 aa).

This sequence belongs to the bacterial ribosomal protein bL36 family.

This is Large ribosomal subunit protein bL36 from Cutibacterium acnes (strain DSM 16379 / KPA171202) (Propionibacterium acnes).